Here is a 266-residue protein sequence, read N- to C-terminus: Apolipoprotein A-I (266 aa).

The N-terminal stretch at Met1–Ala18 is a signal peptide. 2 tandem repeats follow at residues Leu67 to Gly88 and Pro89 to Ser110. The interval Leu67–Gln266 is 10 X approximate tandem repeats. Met109 carries the post-translational modification Methionine sulfoxide. The stretch at Lys111–Gln121 is one 3; half-length repeat. 5 tandem repeats follow at residues Pro122 to Ala143, Pro144 to Thr165, Pro166 to Ala187, Pro188 to Ser209, and Ala210 to Lys231. The stretch at Pro232–Leu242 is one 9; half-length repeat. Repeat 10 spans residues Pro243–Gln266.

The protein belongs to the apolipoprotein A1/A4/E family. Homodimer. Interacts with APOA1BP and CLU. Component of a sperm activating protein complex (SPAP), consisting of APOA1, an immunoglobulin heavy chain, an immunoglobulin light chain and albumin. Interacts with NDRG1. Interacts with SCGB3A2. Interacts with NAXE and YJEFN3. In terms of processing, glycosylated. Post-translationally, palmitoylated. Phosphorylation sites are present in the extracellular medium.

The protein resides in the secreted. In terms of biological role, participates in the reverse transport of cholesterol from tissues to the liver for excretion by promoting cholesterol efflux from tissues and by acting as a cofactor for the lecithin cholesterol acyltransferase (LCAT). As part of the SPAP complex, activates spermatozoa motility. The polypeptide is Apolipoprotein A-I (APOA1) (Mustela putorius furo (European domestic ferret)).